The sequence spans 519 residues: MTPANPTLSNEPQAPHAESDELLPEIFRQTVEHAPIAISITDLKANILYANRAFRTITGYGSEEVLGKNESILSNGTTPRLVYQALWGRLAQKKPWSGVLVNRRKDKTLYLAELTVAPVLNEAGETIYYLGMHRDTSELHELEQRVNNQRLMIEAVVNAAPAAMVVLDRQHRVMLSNPSFCRLARDLVEDGSSESLVALLRENLAAPFETLENQGSAFSGKEISFDLGGRSPRWLSCHGRAIHIENEQAHVFFAPTEERYLLLTINDISELRQKQQDSRLNALKALMAEEELLEGMRETFNAAIHRLQGPVNLISAAMRMLERRLGDKAGNDPVLSAMREASTAGMEALENLSGSIPVRMAESKMPVNLNQLIREVITLCTDQLLAQGIVVDWQPALRLPWVMGGESSQRSMIKHLVDNAIESMSQNQVSRRELFISTRVENHLVRMEITDSGPGIPPDLVLKVFEPFFSTKPPHRVGRGMGLPVVQEIVAKHAGMVHVDTDYREGCRIVVELPFSAST.

The PAS 1 domain maps to L23 to K93. Residues K94–N148 enclose the PAC domain. Positions L151 to A217 constitute a PAS 2 domain. The 216-residue stretch at A302–A517 folds into the Histidine kinase domain. H305 bears the Phosphohistidine; by autocatalysis mark.

FAD is required as a cofactor.

The enzyme catalyses ATP + protein L-histidine = ADP + protein N-phospho-L-histidine.. In terms of biological role, required for the inhibition of NifA activity in response to oxygen and low level of fixed nitrogen. This is Nitrogen fixation regulatory protein (nifL) from Azotobacter vinelandii.